Reading from the N-terminus, the 295-residue chain is uncharacterized protein (295 aa).

The 140-residue stretch at 151–290 (RTAVCARLSS…RAVAAAARAG (140 aa)) folds into the Resolvase/invertase-type recombinase catalytic domain. Serine 159 acts as the O-(5'-phospho-DNA)-serine intermediate in catalysis.

This is an uncharacterized protein from Mycobacterium bovis (strain ATCC BAA-935 / AF2122/97).